Reading from the N-terminus, the 369-residue chain is Leucine carboxyl methyltransferase 1 (369 aa).

S-adenosyl-L-methionine is bound by residues Arg84, Gly108, Asp132, 187–188 (DL), and Glu215.

The protein belongs to the methyltransferase superfamily. LCMT family.

It catalyses the reaction [phosphatase 2A protein]-C-terminal L-leucine + S-adenosyl-L-methionine = [phosphatase 2A protein]-C-terminal L-leucine methyl ester + S-adenosyl-L-homocysteine. In terms of biological role, methylates the carboxyl group of the C-terminal leucine residue of protein phosphatase 2A catalytic subunits to form alpha-leucine ester residues. The chain is Leucine carboxyl methyltransferase 1 (PPM1) from Debaryomyces hansenii (strain ATCC 36239 / CBS 767 / BCRC 21394 / JCM 1990 / NBRC 0083 / IGC 2968) (Yeast).